Here is a 315-residue protein sequence, read N- to C-terminus: Methionyl-tRNA formyltransferase (315 aa).

Position 114-117 (114-117) interacts with (6S)-5,6,7,8-tetrahydrofolate; that stretch reads SLLP.

The protein belongs to the Fmt family.

The catalysed reaction is L-methionyl-tRNA(fMet) + (6R)-10-formyltetrahydrofolate = N-formyl-L-methionyl-tRNA(fMet) + (6S)-5,6,7,8-tetrahydrofolate + H(+). Its function is as follows. Attaches a formyl group to the free amino group of methionyl-tRNA(fMet). The formyl group appears to play a dual role in the initiator identity of N-formylmethionyl-tRNA by promoting its recognition by IF2 and preventing the misappropriation of this tRNA by the elongation apparatus. The polypeptide is Methionyl-tRNA formyltransferase (Corynebacterium efficiens (strain DSM 44549 / YS-314 / AJ 12310 / JCM 11189 / NBRC 100395)).